A 509-amino-acid polypeptide reads, in one-letter code: Bifunctional purine biosynthesis protein PurH (509 aa).

In terms of domain architecture, MGS-like spans 1 to 144; sequence MKRALISVSD…KNYAAVTVVV (144 aa).

Belongs to the PurH family.

The enzyme catalyses (6R)-10-formyltetrahydrofolate + 5-amino-1-(5-phospho-beta-D-ribosyl)imidazole-4-carboxamide = 5-formamido-1-(5-phospho-D-ribosyl)imidazole-4-carboxamide + (6S)-5,6,7,8-tetrahydrofolate. The catalysed reaction is IMP + H2O = 5-formamido-1-(5-phospho-D-ribosyl)imidazole-4-carboxamide. Its pathway is purine metabolism; IMP biosynthesis via de novo pathway; 5-formamido-1-(5-phospho-D-ribosyl)imidazole-4-carboxamide from 5-amino-1-(5-phospho-D-ribosyl)imidazole-4-carboxamide (10-formyl THF route): step 1/1. It functions in the pathway purine metabolism; IMP biosynthesis via de novo pathway; IMP from 5-formamido-1-(5-phospho-D-ribosyl)imidazole-4-carboxamide: step 1/1. The protein is Bifunctional purine biosynthesis protein PurH of Listeria monocytogenes serovar 1/2a (strain ATCC BAA-679 / EGD-e).